Here is a 3433-residue protein sequence, read N- to C-terminus: MSKKPGGPGKSRAVNMLKRGMPRVLSLTGLKRAMLSLIDGRGPTRFVLALLAFFRFTAIAPTRAVLDRWRSVNKQTAMKHLLSFKKELGTLTSAINRRSSKQKKRGGKTGIAFMIGLIAGVGAVTLSNFQGKVMMTVNATDVTDIITIPPAAGKNLCIVRAMDVGHMCDDTITYECPVLSAGNDPEDIDCWCTKLAVYVRYGRCTKTRHSRRSRRSLTVQTHGESTLSNKKGAWMDSTKATRYLVKTESWILRNPGYALVAAVIGWMLGSNTMQRVVFAVLLLLVAPAYSFNCLGMSNRDFLEGVSGATWVDLVLEGDSCVTIMSKDKPTIDVKMMNMEAANLAEVRSYCYLATVSELSTKAACPTMGEAHNDKRADPSFVCKQGVVDRGWGNGCGLFGKGSIDTCAKFACSTKATGRTILKENIKYEVAIFVHGPTTVESHGNYFTQTGAAQAGRFSITPAAPSYTLKLGEYGEVTVDCEPRSGIDTSAYYVMTVGTKTFLVHREWFMDLNLPWSSAESNVWRNRETLMEFEEPHATKQSVIALGSQEGALHQALAGAIPVEFSSNTVKLTSGHLKCRVKMEKLQLKGTTYGVCSKAFRFLGTPADTGHGTVVLELQYTGTDGPCKIPISSVASLNDLTPVGRLVTVNPFVSVSTANAKVLIELEPPFGDSYIVVGRGEQQINHHWHKSGSSIGKAFTATLKGAQRLAALGDTAWDFGSVGGVFTSVGKAVHQVFGGAFRSLFGGMSWITQGLLGALLLWMGINARDRSIALTFLAVGGVLLFLSVNVHADTGCAIDISRQELRCGSGVFIHNDVEAWIDRYKYYPETPQGLAKIIQKAHKEGVCGLRSVSRLEHQMWEAVKDELNTLLKENGVDLSIVVEKQEGMYKSAPRRLTATTEKLEIGWKAWGKSILFAPELANNTFVIDGPETKECPTQNRAWNNLEVEDFGFGLTSTRMFLRVRESNTTECDSKIIGTAVKNNLAIHSDLSYWIESRFNDTWKLERAVLGEVKSCTWPETHTLWGDGVLESDLIIPITLAGPRSNHNRRPGYKTQSQGPWDEGRVEIDFDYCPGTTVTLSESCGHRGPATRTTTESGKLITDWCCRSCTLPPLRYQTDNGCWYGMEIRPQRHDEKTLVQSQVNAYNADMIDPFQLGLLVVFLATQEVLRKRWTAKISMPAILIALLVLVFGGITYTDVLRYVILVGAAFAESNSGGDVVHLALMATFKIQPVFMVASFLKARWTNQENILLMLAAAFFQMAYYDARQILLWEMPDVLNSLAVAWMILRAITFTTTSNVVVPLLALLTPGLRCLNLDVYRILLLMVGIGSLIREKRSAAAKKKGASLLCLALASTGFFNPMILAAGLVACDPNRKRGWPATEVMTAVGLMFAIVGGLAELDIDSMAIPMTIAGLMFAAFVISGKSTDMWIERTADISWEGDAEITGSSERVDVRLDDDGNFQLMNDPGAPWKIWMLRMACLAISAYTPWAILPSVVGFWITLQYTKRGGVLWDTPSPKEYKRGDTTTGVYRIMTRGLLGSYQAGAGVMVEGVFHTLWHTTKGAALMSGEGRLDPYWGSVKEDRLCYGGPWKLQHKWNGQDEVQMIVVEPGKNVKNVQTKPGVFKTPEGEIGAVTLDFPTGTSGSPIVDKNGDVIGLYGNGVIMPNGSYISAIVQGERMDEPVPAGFEPEMLRKKQITVLDLHPGAGKTRRILPQIIKEAINRRLRTAVLAPTRVVAAEMAEALRGLPIRYQTSAVAREHNGNEIVDVMCHATLTHRLMSPHRVPNYNLFVMDEAHFTDPASIAARGYISTRVELGEAAAIFMTATPPGTSDPFPESNAPISDLQTEIPDRAWNSGYEWITEYIGKTVWFVPSVKMGNEIALCLQRAGKKVIQLNRKSYETEYPKCKNDDWDFVVTTDISEMGANFKASRVIDSRKSVKPTIITEGEGRVILGEPSAVTAASAAQRRGRTGRNPSQAGDEYCYGGHTNEDDSNCAHWTEARIMLDNINMPNGLIAQFYQPEREKVYTMDGEYRLRGEERKNFLELLRTADLPVWLAYKVAAAGVSYHDRRWCFDGPRTNTILEDNNEVEVITKLGERKILRPRWIDARVYSDHQALKSFKDFASGKRSQIGFIEVLGKMPEHFMGKTWEALDTMYVVATAEKGGRAHRMALEELPDALQTIALIALLSVMTMGVFFLLMQRKGIGKIGLGGVVLGAATFFCWMAEVPGTKIAGMLLLSLLLMIVLIPEPEKQRSQTDNQLAVFLICVLTLVGAVAANEMGWLDKTKSDISGLFGQRIETKENFSIGEFLLDLRPATAWSLYAVTTAVLTPLLKHLITSDYITTSLTSINVQASALFTLARGFPFVDVGVSALLLAAGCWGQVTLTVTVTSATLLFCHYAYMVPGWQAEAMRSAQRRTAAGIMKNAVVDGIVATDVPELERTTPIMQKKVGQVMLILVSLAALVVNPSVKTVREAGILITAAAVTLWENGASSVWNATTAIGLCHIMRGGWLSCLSITWTLVKNMEKPGLKRGGAKGRTLGEVWKERLNQMTKEEFIRYRKEAITEVDRSAAKHARKERNITGGHPVSRGTAKLRWLVERRFLEPVGKVIDLGCGRGGWCYYMATQKRVQEVRGYTKGGPGHEEPQLVQSYGWNIVTMKSGVDVFYRPSECCDTLLCDIGESSSSAEVEEHRTLRVLEMVEDWLHRGPKEFCVKVLCPYMPKVIEKMELLQRRYGGGLVRNPLSRNSTHEMYWVSRASGNVVHSVNMTSQVLLGRMEKKTWKGPQYEEDVNLGSGTRAVGKPLLNSDTSKIKNRIERLRREYSSTWHHDENHPYRTWNYHGSYEVKPTGSASSLVNGVVRLLSKPWDTITNVTTMAMTDTTPFGQQRVFKEKVDTKAPEPPEGVKYVLNETTNWLWAFLAREKRPRMCSREEFIRKVNSNAALGAMFEEQNQWRSAREAVEDPKFWEMVDEEREAHLRGECHTCIYNMMGKREKKPGEFGKAKGSRAIWFMWLGARFLEFEALGFLNEDHWLGRKNSGGGVEGLGLQKLGYILREVGTRPGGRIYADDTAGWDTRITRADLENEAKVLELLDGEHRRLARAIIELTYRHKVVKVMRPAADGRTVMDVISREDQRGSGQVVTYALNTFTNLAVQLVRMMEGEGVIGPDDVEKLTKGKGPKVRTWLSENGEERLSRMAVSGDDCVVKPLDDRFATSLHFLNAMSKVRKDIQEWKPSTGWYDWQQVPFCSNHFTELIMKDGRTLVTPCRGQDELVGRARISPGAGWNVRDTACLAKSYAQMWLLLYFHRRDLRLMANAICSAVPVNWVPTGRTTWSIHAGGEWMTTEDMLEVWNRVWIEENEWMEDKTPVEKWSDVPYSGKREDIWCGSLIGTRARATWAENIQVAINQVRSIIGDEKYVDYMSSLKRYEDTTLVEDTVL.

The interaction with host EXOC1 stretch occupies residues 2 to 15 (SKKPGGPGKSRAVN). At 2–105 (SKKPGGPGKS…NRRSSKQKKR (104 aa)) the chain is on the cytoplasmic side. Residues 37–72 (LIDGRGPTRFVLALLAFFRFTAIAPTRAVLDRWRSV) form a hydrophobic; homodimerization of capsid protein C region. A propeptide spans 106–123 (GGKTGIAFMIGLIAGVGA) (ER anchor for the capsid protein C, removed in mature form by serine protease NS3). Residues 106–126 (GGKTGIAFMIGLIAGVGAVTL) traverse the membrane as a helical segment. Topologically, residues 127–248 (SNFQGKVMMT…KATRYLVKTE (122 aa)) are extracellular. N-linked (GlcNAc...) asparagine; by host glycosylation occurs at Asn138. The helical transmembrane segment at 249-269 (SWILRNPGYALVAAVIGWMLG) threads the bilayer. The Cytoplasmic portion of the chain corresponds to 270 to 273 (SNTM). The helical transmembrane segment at 274 to 290 (QRVVFAVLLLLVAPAYS) threads the bilayer. The Extracellular portion of the chain corresponds to 291 to 743 (FNCLGMSNRD…QVFGGAFRSL (453 aa)). 4 cysteine pairs are disulfide-bonded: Cys293-Cys320, Cys350-Cys406, Cys364-Cys395, and Cys382-Cys411. The segment at 388-401 (DRGWGNGCGLFGKG) is fusion peptide. N-linked (GlcNAc...) asparagine; by host glycosylation is present at Asn444. 2 cysteine pairs are disulfide-bonded: Cys480–Cys578 and Cys595–Cys626. A helical membrane pass occupies residues 744 to 764 (FGGMSWITQGLLGALLLWMGI). Over 765–770 (NARDRS) the chain is Cytoplasmic. A helical transmembrane segment spans residues 771-791 (IALTFLAVGGVLLFLSVNVHA). Over 792-1216 (DTGCAIDISR…AFAESNSGGD (425 aa)) the chain is Extracellular. 2 cysteine pairs are disulfide-bonded: Cys795-Cys806 and Cys846-Cys934. Asn921, Asn966, and Asn998 each carry an N-linked (GlcNAc...) asparagine; by host glycan. 4 disulfide bridges follow: Cys970/Cys1014, Cys1071/Cys1120, Cys1082/Cys1103, and Cys1104/Cys1107. The chain crosses the membrane as a helical span at residues 1217–1237 (VVHLALMATFKIQPVFMVASF). Topologically, residues 1238–1247 (LKARWTNQEN) are cytoplasmic. Residues 1248–1268 (ILLMLAAAFFQMAYYDARQIL) form a helical membrane-spanning segment. At 1269 to 1288 (LWEMPDVLNSLAVAWMILRA) the chain is on the lumenal side. Residues 1289–1309 (ITFTTTSNVVVPLLALLTPGL) form a helical membrane-spanning segment. Residues 1310-1316 (RCLNLDV) lie on the Cytoplasmic side of the membrane. Residues 1317–1335 (YRILLLMVGIGSLIREKRS) traverse the membrane as a helical segment. The Lumenal portion of the chain corresponds to 1336 to 1345 (AAAKKKGASL). The helical transmembrane segment at 1346 to 1366 (LCLALASTGFFNPMILAAGLV) threads the bilayer. The Cytoplasmic segment spans residues 1367–1375 (ACDPNRKRG). A helical membrane pass occupies residues 1376-1396 (WPATEVMTAVGLMFAIVGGLA). At 1397–1399 (ELD) the chain is on the lumenal side. A helical membrane pass occupies residues 1400-1420 (IDSMAIPMTIAGLMFAAFVIS). Residues 1421–1477 (GKSTDMWIERTADISWEGDAEITGSSERVDVRLDDDGNFQLMNDPGAPWKIWMLRMA) are Cytoplasmic-facing. The interacts with and activates NS3 protease stretch occupies residues 1428 to 1467 (IERTADISWEGDAEITGSSERVDVRLDDDGNFQLMNDPGA). Residues 1478-1498 (CLAISAYTPWAILPSVVGFWI) constitute an intramembrane region (helical). The Cytoplasmic segment spans residues 1499–2174 (TLQYTKRGGV…RMALEELPDA (676 aa)). The region spanning 1506–1683 (GGVLWDTPSP…ERMDEPVPAG (178 aa)) is the Peptidase S7 domain. Residues His1556, Asp1580, and Ser1640 each act as charge relay system; for serine protease NS3 activity in the active site. Positions 1686-1842 (PEMLRKKQIT…ESNAPISDLQ (157 aa)) constitute a Helicase ATP-binding domain. The segment at 1690-1693 (RKKQ) is important for RNA-binding. Residue 1699–1706 (LHPGAGKT) coordinates ATP. A DEAH box motif is present at residues 1790–1793 (DEAH). The region spanning 1853–2018 (GYEWITEYIG…GLIAQFYQPE (166 aa)) is the Helicase C-terminal domain. N6-acetyllysine; by host is present on Lys1894. A regulates the ATPase activity of NS3 helicase region spans residues 2169 to 2173 (EELPD). Residues 2175–2195 (LQTIALIALLSVMTMGVFFLL) traverse the membrane as a helical segment. Over 2196-2200 (MQRKG) the chain is Lumenal. The helical intramembrane region spans 2201-2221 (IGKIGLGGVVLGAATFFCWMA). Residue Glu2222 is a topological domain, lumenal. The chain crosses the membrane as a helical span at residues 2223–2243 (VPGTKIAGMLLLSLLLMIVLI). Over 2244-2258 (PEPEKQRSQTDNQLA) the chain is Cytoplasmic. A helical transmembrane segment spans residues 2259–2273 (VFLICVLTLVGAVAA). The Lumenal segment spans residues 2274–2312 (NEMGWLDKTKSDISGLFGQRIETKENFSIGEFLLDLRPA). Residues 2313 to 2333 (TAWSLYAVTTAVLTPLLKHLI) constitute an intramembrane region (helical). Residues 2334 to 2380 (TSDYITTSLTSINVQASALFTLARGFPFVDVGVSALLLAAGCWGQVT) are Lumenal-facing. A helical transmembrane segment spans residues 2381 to 2401 (LTVTVTSATLLFCHYAYMVPG). Topologically, residues 2402–2444 (WQAEAMRSAQRRTAAGIMKNAVVDGIVATDVPELERTTPIMQK) are cytoplasmic. A helical membrane pass occupies residues 2445–2465 (KVGQVMLILVSLAALVVNPSV). Over 2466–2470 (KTVRE) the chain is Lumenal. The chain crosses the membrane as a helical span at residues 2471-2491 (AGILITAAAVTLWENGASSVW). Residues 2492-3433 (NATTAIGLCH…DTTLVEDTVL (942 aa)) lie on the Cytoplasmic side of the membrane. The mRNA cap 0-1 NS5-type MT domain maps to 2529 to 2794 (GGAKGRTLGE…DVNLGSGTRA (266 aa)). Ser2584 provides a ligand contact to S-adenosyl-L-methionine. Residue Ser2584 is modified to Phosphoserine. Lys2589 (for 2'-O-MTase activity) is an active-site residue. S-adenosyl-L-methionine is bound by residues Gly2614, Trp2615, Thr2632, Lys2633, Asp2659, and Val2660. Catalysis depends on Asp2674, which acts as the For 2'-O-MTase activity. S-adenosyl-L-methionine is bound at residue Ile2675. Active-site for 2'-O-MTase activity residues include Lys2710 and Glu2746. An S-adenosyl-L-methionine-binding site is contributed by Tyr2748. Residues 2917–2919 (REK) carry the Nuclear localization signal motif. Zn(2+) is bound by residues Glu2968, His2972, Cys2977, and Cys2980. The 153-residue stretch at 3058-3210 (GRIYADDTAG…KPLDDRFATS (153 aa)) folds into the RdRp catalytic domain. Zn(2+)-binding residues include His3245, Cys3261, and Cys3380. Positions 3431-3433 (TVL) match the PDZ-binding motif.

It in the N-terminal section; belongs to the class I-like SAM-binding methyltransferase superfamily. mRNA cap 0-1 NS5-type methyltransferase family. In terms of assembly, homodimer; further assembles as a homotetramer. Interacts (via N-terminus) with host EXOC1 (via C-terminus); this interaction results in EXOC1 degradation through the proteasome degradation pathway. Forms heterodimers with envelope protein E in the endoplasmic reticulum and Golgi. As to quaternary structure, homodimer; in the endoplasmic reticulum and Golgi. Interacts with protein prM. Interacts with non-structural protein 1. In terms of assembly, homodimer; Homohexamer when secreted. Interacts with envelope protein E. NS1 interacts with NS4B. Interacts with host complement protein CFH; this interaction leads to the degradation of C3. Interacts (via N-terminus) with serine protease NS3. As to quaternary structure, forms a heterodimer with serine protease NS3. May form homooligomers. In terms of assembly, forms a heterodimer with NS2B. Interacts with non-structural protein 2A (via N-terminus). Interacts with NS4B. Interacts with unphosphorylated RNA-directed RNA polymerase NS5; this interaction stimulates RNA-directed RNA polymerase NS5 guanylyltransferase activity. Interacts with Serine protease/Helicase NS3. Interacts with NS1. As to quaternary structure, homodimer. Interacts with host STAT2; this interaction inhibits the phosphorylation of the latter, and, when all viral proteins are present (polyprotein), targets STAT2 for degradation. Interacts with serine protease NS3. In terms of processing, specific enzymatic cleavages in vivo yield mature proteins. Cleavages in the lumen of endoplasmic reticulum are performed by host signal peptidase, whereas cleavages in the cytoplasmic side are performed by serine protease NS3. Signal cleavage at the 2K-4B site requires a prior NS3 protease-mediated cleavage at the 4A-2K site. Post-translationally, cleaved in post-Golgi vesicles by a host furin, releasing the mature small envelope protein M, and peptide pr. This cleavage is incomplete as up to 30% of viral particles still carry uncleaved prM. N-glycosylated. In terms of processing, N-glycosylated. The excreted form is glycosylated and this is required for efficient secretion of the protein from infected cells. Post-translationally, acetylated by host KAT5. Acetylation modulates NS3 RNA-binding and unwinding activities and plays an important positive role for viral replication. Phosphorylated on serines residues. This phosphorylation may trigger NS5 nuclear localization.

Its subcellular location is the virion. The protein resides in the host nucleus. It is found in the host cytoplasm. It localises to the host perinuclear region. The protein localises to the secreted. Its subcellular location is the virion membrane. The protein resides in the host endoplasmic reticulum membrane. The enzyme catalyses Selective hydrolysis of -Xaa-Xaa-|-Yaa- bonds in which each of the Xaa can be either Arg or Lys and Yaa can be either Ser or Ala.. The catalysed reaction is RNA(n) + a ribonucleoside 5'-triphosphate = RNA(n+1) + diphosphate. It carries out the reaction a ribonucleoside 5'-triphosphate + H2O = a ribonucleoside 5'-diphosphate + phosphate + H(+). It catalyses the reaction ATP + H2O = ADP + phosphate + H(+). The enzyme catalyses a 5'-end (5'-triphosphoguanosine)-ribonucleoside in mRNA + S-adenosyl-L-methionine = a 5'-end (N(7)-methyl 5'-triphosphoguanosine)-ribonucleoside in mRNA + S-adenosyl-L-homocysteine. The catalysed reaction is a 5'-end (N(7)-methyl 5'-triphosphoguanosine)-ribonucleoside in mRNA + S-adenosyl-L-methionine = a 5'-end (N(7)-methyl 5'-triphosphoguanosine)-(2'-O-methyl-ribonucleoside) in mRNA + S-adenosyl-L-homocysteine + H(+). Plays a role in virus budding by binding to the cell membrane and gathering the viral RNA into a nucleocapsid that forms the core of a mature virus particle. During virus entry, may induce genome penetration into the host cytoplasm after hemifusion induced by the surface proteins. Can migrate to the cell nucleus where it modulates host functions. Overcomes the anti-viral effects of host EXOC1 by sequestering and degrading the latter through the proteasome degradation pathway. Functionally, inhibits RNA silencing by interfering with host Dicer. Its function is as follows. Prevents premature fusion activity of envelope proteins in trans-Golgi by binding to envelope protein E at pH6.0. After virion release in extracellular space, gets dissociated from E dimers. In terms of biological role, acts as a chaperone for envelope protein E during intracellular virion assembly by masking and inactivating envelope protein E fusion peptide. prM is the only viral peptide matured by host furin in the trans-Golgi network probably to avoid catastrophic activation of the viral fusion activity in acidic Golgi compartment prior to virion release. prM-E cleavage is inefficient, and many virions are only partially matured. These uncleaved prM would play a role in immune evasion. May play a role in virus budding. Exerts cytotoxic effects by activating a mitochondrial apoptotic pathway through M ectodomain. May display a viroporin activity. Functionally, binds to host cell surface receptor and mediates fusion between viral and cellular membranes. Envelope protein is synthesized in the endoplasmic reticulum in the form of heterodimer with protein prM. They play a role in virion budding in the ER, and the newly formed immature particle is covered with 60 spikes composed of heterodimer between precursor prM and envelope protein E. The virion is transported to the Golgi apparatus where the low pH causes dissociation of PrM-E heterodimers and formation of E homodimers. prM-E cleavage is inefficient, and many virions are only partially matured. These uncleaved prM would play a role in immune evasion. Its function is as follows. Involved in immune evasion, pathogenesis and viral replication. Once cleaved off the polyprotein, is targeted to three destinations: the viral replication cycle, the plasma membrane and the extracellular compartment. Essential for viral replication. Required for formation of the replication complex and recruitment of other non-structural proteins to the ER-derived membrane structures. Excreted as a hexameric lipoparticle that plays a role against host immune response. Antagonizing the complement function. Binds to the host macrophages and dendritic cells. Inhibits signal transduction originating from Toll-like receptor 3 (TLR3). In terms of biological role, component of the viral RNA replication complex that functions in virion assembly and antagonizes the host alpha/beta interferon antiviral response. Inhibits STAT2 translocation in the nucleus after IFN-alpha treatment. Required cofactor for the serine protease function of NS3. May have membrane-destabilizing activity and form viroporins. Inhibits STAT2 translocation in the nucleus after IFN-alpha treatment. Functionally, displays three enzymatic activities: serine protease, NTPase and RNA helicase. NS3 serine protease, in association with NS2B, performs its autocleavage and cleaves the polyprotein at dibasic sites in the cytoplasm: C-prM, NS2A-NS2B, NS2B-NS3, NS3-NS4A, NS4A-2K and NS4B-NS5. NS3 RNA helicase binds RNA and unwinds dsRNA in the 3' to 5' direction. NS3 supports the separation of RNA daughter and template strands during viral replication. The helicase part is involved in the inhibition of phosphorylation of host STAT1, and thereby inhibition of host type-I IFN signaling. In addition, NS3 assists the initiation of replication by unwinding the RNA secondary structure in the 3' non-translated region (NTR). Inhibits STAT2 translocation in the nucleus after IFN-alpha treatment. Its function is as follows. Regulates the ATPase activity of the NS3 helicase activity. NS4A allows NS3 helicase to conserve energy during unwinding. Induces host ER membrane rearrangements to provide a compartment where viral replication can take part. Inhibits STAT2 translocation in the nucleus after IFN-alpha treatment. In terms of biological role, functions as a signal peptide for NS4B and is required for the interferon antagonism activity of the latter. Induces the formation of ER-derived membrane vesicles where the viral replication takes place. Inhibits interferon (IFN)-induced host STAT1 phosphorylation and nuclear translocation, thereby preventing the establishment of cellular antiviral state by blocking the IFN-alpha/beta pathway. Inhibits STAT2 translocation in the nucleus after IFN-alpha treatment. Functionally, replicates the viral (+) and (-) genome, and performs the capping of genomes in the cytoplasm. NS5 methylates viral RNA cap at guanine N-7 and ribose 2'-O positions. Besides its role in genome replication, also prevents the establishment of cellular antiviral state by blocking the interferon-alpha/beta (IFN-alpha/beta) signaling pathway. Inhibits host JAK1 and TYK2 phosphorylation, thereby preventing activation of JAK-STAT signaling pathway. May transcriptionally regulate host genes involved in antiviral response when localized in the nucleus. The protein is Genome polyprotein of Ciconiiformes (storks and others).